The chain runs to 1243 residues: MNSPSPFGQNEWLVEEMYRKFREDPSSVDPSWHEFLVDYSPEPTNDAPAGNGKPAAAPTAPPEPASAPAPKPASTNGGAPPAKADTSTTRAPEKKPEEKTSPAPKAKTAAPAGVSDDDETQVLRGAAAAVVKNMSASLDVPTATSVRAIPAKAMIDNRIVINNHLKRTRGGKISFTHLLGYAIVQAVKKFPNMNRHFAEIDGKPVAVTPAHTNLGLAIDLPGKDGKRSLVVAAIKNCETMHFGQFIAAYEDIVRRARDGKLTAEDFAGVTISLTNPGTIGTVHSVPRLMKGQGAIVGAGAMEYPAEFQGASEERIAELGVGKLMTLTSTYDHRIIQGAESGDFLRTIHTLLLDDEFYDEIFRELGIPHEPVRWRIDNPDSIEDKNARVIELIAAYRNRGHLMADIDPLRLDKTRFRSHPDLDVNTHGLTLWDLDREFKVNGFAGKTHKKLRDILGLLRDAYCRHIGVEYTHILEPEQQQWLQERIEVKHEKPTVAEQKYILSKLNAAEAFETFLQTKYVGQKRFSLEGAETVIPMMDAAIDQCAEHGLDEVVIGMPHRGRLNVLANIVGKPYSQIFTEFEGNLNPSQAHGSGDVKYHLGANGTYIQMFGDNDIDVSLVANPSHLEAVDPVLEGLVRAKQDILDKGNGPDGFTVVPMMLHGDAAFAGQGVVAETLNLALLRGYRTGGTIHIIVNNQIGFTTSPYDSRSSEYCTDVAKMIGAPIFHVNGDDPEACVWVAKLAVDFRQKFKKDVVIDMLCYRRRGHNEGDDPSMTQPTMYDVIDTKRGVRKSYTEALIGRGDISMKEAEDALRDYQGQLERVFNEVRELEKHAIAPSSSVESDQMVPAGMSTAVDKSLLARIGDAHLGYPDDFNVHPRVKPVLEKRREMAYEGKVDWAFAELLALGTFLAEGKTIRFTGQDTRRGTFTQRHSVIIDRQTGREFTPLDLLTVDSDGNPTGGKFMAYDSALSEFAAVGFEYGYSVGNPNALVLWEAQFGDFVNGAQSIIDEFISSGEAKWGQLSDVVLLLPHGHEGQGPDHTSGRIERFLLLWAEGSMTIAMPSTPANYFHLLRRHGLDGIHRPLIVFTPKSMLRNKAAVSDLKDFTEMKFRSVLEEPTYTEGTGDRSKAKRILLTSGKLYYELAARKSKEGRDDVAILRLEQLAPLPKRRLAATLDEYPNAEQYFWVQEEPANQGAWPTLGLTLPEVLPEKLAGIKRISRRAMSAPSSGSSKVHAVEQQEIIDEAFG.

Residues 1-40 (MNSPSPFGQNEWLVEEMYRKFREDPSSVDPSWHEFLVDYS) form a 2-oxoglutarate dehydrogenase E1, N-terminal part region. The segment covering 22–36 (REDPSSVDPSWHEFL) has biased composition (basic and acidic residues). A disordered region spans residues 22-118 (REDPSSVDPS…AAPAGVSDDD (97 aa)). A linker region spans residues 41 to 103 (PEPTNDAPAG…KKPEEKTSPA (63 aa)). A compositionally biased stretch (low complexity) spans 47–58 (APAGNGKPAAAP). A compositionally biased stretch (pro residues) spans 59–71 (TAPPEPASAPAPK). Over residues 91-100 (APEKKPEEKT) the composition is skewed to basic and acidic residues. A compositionally biased stretch (low complexity) spans 101 to 112 (SPAPKAKTAAPA). The segment at 104–353 (PKAKTAAPAG…LRTIHTLLLD (250 aa)) is succinyltransferase E2. The active-site Proton acceptor; for succinyltransferase activity is the His-332. Residues 354 to 1243 (DEFYDEIFRE…QQEIIDEAFG (890 aa)) are 2-oxoglutarate dehydrogenase E1, C-terminal part. Arg-558 serves as a coordination point for thiamine diphosphate. His-597 and Ser-622 together coordinate 2-oxoglutarate. Thiamine diphosphate-binding residues include Ser-622, Leu-624, Asp-661, Ala-662, Ala-663, and Asn-694. Asp-661 lines the Mg(2+) pocket. Asn-694 and Ile-696 together coordinate Mg(2+). Residues 799-831 (DISMKEAEDALRDYQGQLERVFNEVRELEKHAI) are a coiled coil. His-1036 lines the 2-oxoglutarate pocket. The acetyl-CoA site is built by Thr-1054, Arg-1070, Lys-1105, Ser-1108, Gln-1158, Arg-1165, and Arg-1166.

Belongs to the 2-oxoacid dehydrogenase family. Kgd subfamily. Homodimer. The 2-oxoglutarate dehydrogenase (ODH) complex contains multiple copies of three enzymatic components: 2-oxoglutarate dehydrogenase (E1), dihydrolipoamide succinyltransferase (E2) and lipoamide dehydrogenase (E3). Mg(2+) serves as cofactor. The cofactor is thiamine diphosphate.

The enzyme catalyses glyoxylate + 2-oxoglutarate + H(+) = 2-hydroxy-3-oxoadipate + CO2. It carries out the reaction 2-oxoglutarate + H(+) = succinate semialdehyde + CO2. It catalyses the reaction N(6)-[(R)-lipoyl]-L-lysyl-[protein] + 2-oxoglutarate + H(+) = N(6)-[(R)-S(8)-succinyldihydrolipoyl]-L-lysyl-[protein] + CO2. The catalysed reaction is N(6)-[(R)-dihydrolipoyl]-L-lysyl-[protein] + succinyl-CoA = N(6)-[(R)-S(8)-succinyldihydrolipoyl]-L-lysyl-[protein] + CoA. Its pathway is carbohydrate metabolism; tricarboxylic acid cycle; succinate from 2-oxoglutarate (transferase route): step 1/2. It participates in carbohydrate metabolism; tricarboxylic acid cycle; succinyl-CoA from 2-oxoglutarate (dehydrogenase route): step 1/1. Alpha-ketoglutarate dehydrogenase and decarboxylase activities are inhibited by unphosphorylated GarA, and allosterically activated by acetyl-CoA, the main substrate of the TCA cycle. Its function is as follows. Shows three enzymatic activities that share a first common step, the attack of thiamine-PP on 2-oxoglutarate (alpha-ketoglutarate, KG), leading to the formation of an enamine-thiamine-PP intermediate upon decarboxylation. Thus, displays KGD activity, catalyzing the decarboxylation from five-carbon 2-oxoglutarate to four-carbon succinate semialdehyde (SSA). Also catalyzes C-C bond formation between the activated aldehyde formed after decarboxylation of alpha-ketoglutarate and the carbonyl of glyoxylate (GLX), to yield 2-hydroxy-3-oxoadipate (HOA), which spontaneously decarboxylates to form 5-hydroxylevulinate (HLA). And is also a component of the 2-oxoglutarate dehydrogenase (ODH) complex, that catalyzes the overall conversion of 2-oxoglutarate to succinyl-CoA and CO(2). The KG decarboxylase and KG dehydrogenase reactions provide two alternative, tightly regulated, pathways connecting the oxidative and reductive branches of the TCA cycle. The polypeptide is Multifunctional 2-oxoglutarate metabolism enzyme (kgd) (Mycolicibacterium vanbaalenii (strain DSM 7251 / JCM 13017 / BCRC 16820 / KCTC 9966 / NRRL B-24157 / PYR-1) (Mycobacterium vanbaalenii)).